Consider the following 220-residue polypeptide: Peritrophin-55 (220 aa).

Residues 1–19 (MKSVFVCTLVLALAHHAFA) form the signal peptide. N29 carries an N-linked (GlcNAc...) asparagine glycan. Positions 33 to 95 (ITPCLGNDII…NFIPAPTCEY (63 aa)) constitute a Chitin-binding type-2 domain. Residues C68 and C84 are joined by a disulfide bond. A compositionally biased stretch (low complexity) spans 116-165 (TTLKTTPSKTTPIVTTAPPSTPVPSTIVTNKPDPTTPKTTKPPKVTTTVN). A disordered region spans residues 116–220 (TTLKTTPSKT…TPPSIVQLQN (105 aa)). The span at 197 to 210 (PTPPGMPPTPPSFG) shows a compositional bias: pro residues.

In terms of processing, glycosylated. Larval peritrophic membrane.

Functionally, may bind oligosaccharide structures. This chain is Peritrophin-55, found in Lucilia cuprina (Green bottle fly).